We begin with the raw amino-acid sequence, 375 residues long: 23S rRNA (uracil(747)-C(5))-methyltransferase RlmC (375 aa).

Positions 3, 11, 14, and 87 each coordinate [4Fe-4S] cluster. S-adenosyl-L-methionine is bound by residues Gln212, Phe241, Glu262, and Asn307. Cys334 (nucleophile) is an active-site residue.

It belongs to the class I-like SAM-binding methyltransferase superfamily. RNA M5U methyltransferase family. RlmC subfamily.

The enzyme catalyses uridine(747) in 23S rRNA + S-adenosyl-L-methionine = 5-methyluridine(747) in 23S rRNA + S-adenosyl-L-homocysteine + H(+). Catalyzes the formation of 5-methyl-uridine at position 747 (m5U747) in 23S rRNA. This is 23S rRNA (uracil(747)-C(5))-methyltransferase RlmC from Shigella boydii serotype 4 (strain Sb227).